The primary structure comprises 181 residues: Inner membrane-spanning protein YciB (181 aa).

5 consecutive transmembrane segments (helical) span residues 10–30 (LIIFFALYKFYDIYVATGALI), 50–70 (MQLITFVMVALFGGMTLALHD), 80–100 (IVYVVFALGLTISQIMGKPAI), 120–140 (WAWVMFFSGCAALNLYVAYHL), and 148–168 (FKVFGLLAATLVFTLLTGGYI).

Belongs to the YciB family.

It localises to the cell inner membrane. Its function is as follows. Plays a role in cell envelope biogenesis, maintenance of cell envelope integrity and membrane homeostasis. The chain is Inner membrane-spanning protein YciB from Vibrio cholerae serotype O1 (strain ATCC 39315 / El Tor Inaba N16961).